We begin with the raw amino-acid sequence, 402 residues long: Nicotinate phosphoribosyltransferase (402 aa).

A Phosphohistidine; by autocatalysis modification is found at histidine 221.

It belongs to the NAPRTase family. Transiently phosphorylated on a His residue during the reaction cycle. Phosphorylation strongly increases the affinity for substrates and increases the rate of nicotinate D-ribonucleotide production. Dephosphorylation regenerates the low-affinity form of the enzyme, leading to product release.

It carries out the reaction nicotinate + 5-phospho-alpha-D-ribose 1-diphosphate + ATP + H2O = nicotinate beta-D-ribonucleotide + ADP + phosphate + diphosphate. Its pathway is cofactor biosynthesis; NAD(+) biosynthesis; nicotinate D-ribonucleotide from nicotinate: step 1/1. Functionally, catalyzes the synthesis of beta-nicotinate D-ribonucleotide from nicotinate and 5-phospho-D-ribose 1-phosphate at the expense of ATP. This is Nicotinate phosphoribosyltransferase from Sodalis glossinidius (strain morsitans).